Reading from the N-terminus, the 225-residue chain is NAD(P)H-quinone oxidoreductase subunit K, chloroplastic (225 aa).

The [4Fe-4S] cluster site is built by C43, C44, C108, and C139.

Belongs to the complex I 20 kDa subunit family. NDH is composed of at least 16 different subunits, 5 of which are encoded in the nucleus. The cofactor is [4Fe-4S] cluster.

It is found in the plastid. The protein resides in the chloroplast thylakoid membrane. The catalysed reaction is a plastoquinone + NADH + (n+1) H(+)(in) = a plastoquinol + NAD(+) + n H(+)(out). It carries out the reaction a plastoquinone + NADPH + (n+1) H(+)(in) = a plastoquinol + NADP(+) + n H(+)(out). Functionally, NDH shuttles electrons from NAD(P)H:plastoquinone, via FMN and iron-sulfur (Fe-S) centers, to quinones in the photosynthetic chain and possibly in a chloroplast respiratory chain. The immediate electron acceptor for the enzyme in this species is believed to be plastoquinone. Couples the redox reaction to proton translocation, and thus conserves the redox energy in a proton gradient. In Dioscorea elephantipes (Elephant's foot yam), this protein is NAD(P)H-quinone oxidoreductase subunit K, chloroplastic.